Reading from the N-terminus, the 107-residue chain is Iron-sulfur cluster assembly protein CyaY (107 aa).

This sequence belongs to the frataxin family.

Involved in iron-sulfur (Fe-S) cluster assembly. May act as a regulator of Fe-S biogenesis. The protein is Iron-sulfur cluster assembly protein CyaY of Thioalkalivibrio sulfidiphilus (strain HL-EbGR7).